The following is a 467-amino-acid chain: Ran-binding protein M homolog (467 aa).

The disordered stretch occupies residues 1–25 (MNSSPPPANSANGDTTNNGENGQDL). Residues 9–25 (NSANGDTTNNGENGQDL) are compositionally biased toward polar residues. In terms of domain architecture, B30.2/SPRY spans 31 to 219 (DKIRLSAKRD…VLVNFGKKKF (189 aa)). The 33-residue stretch at 244 to 276 (PPNIGYGLVKTYLLHYGYEETLDAFNLATKNTV) folds into the LisH domain. The CTLH domain maps to 295–353 (ALKQRKNLRQLVRNGEIDTALAELQKLYPQIVQDDKSVVCFLLHCQKFIELVRVGKLEE).

It belongs to the RANBP9/10 family. Interacts with WDR36, WDS, GID8, MAEA and RMD5.

The protein localises to the cytoplasm. It localises to the nucleus. It is found in the perinuclear region. The polypeptide is Ran-binding protein M homolog (Arabidopsis thaliana (Mouse-ear cress)).